Here is a 382-residue protein sequence, read N- to C-terminus: Dual-specificity RNA methyltransferase RlmN (382 aa).

The active-site Proton acceptor is the E95. The Radical SAM core domain maps to 101-349 (EETRGTLCVS…TTVRKTRGDD (249 aa)). C108 and C354 form a disulfide bridge. [4Fe-4S] cluster is bound by residues C115, C119, and C122. Residues 180 to 181 (GE), S212, 234 to 236 (SLH), and N311 contribute to the S-adenosyl-L-methionine site. C354 serves as the catalytic S-methylcysteine intermediate.

This sequence belongs to the radical SAM superfamily. RlmN family. Requires [4Fe-4S] cluster as cofactor.

Its subcellular location is the cytoplasm. It catalyses the reaction adenosine(2503) in 23S rRNA + 2 reduced [2Fe-2S]-[ferredoxin] + 2 S-adenosyl-L-methionine = 2-methyladenosine(2503) in 23S rRNA + 5'-deoxyadenosine + L-methionine + 2 oxidized [2Fe-2S]-[ferredoxin] + S-adenosyl-L-homocysteine. The enzyme catalyses adenosine(37) in tRNA + 2 reduced [2Fe-2S]-[ferredoxin] + 2 S-adenosyl-L-methionine = 2-methyladenosine(37) in tRNA + 5'-deoxyadenosine + L-methionine + 2 oxidized [2Fe-2S]-[ferredoxin] + S-adenosyl-L-homocysteine. In terms of biological role, specifically methylates position 2 of adenine 2503 in 23S rRNA and position 2 of adenine 37 in tRNAs. m2A2503 modification seems to play a crucial role in the proofreading step occurring at the peptidyl transferase center and thus would serve to optimize ribosomal fidelity. The protein is Dual-specificity RNA methyltransferase RlmN of Paraburkholderia phymatum (strain DSM 17167 / CIP 108236 / LMG 21445 / STM815) (Burkholderia phymatum).